Consider the following 787-residue polypeptide: MKVAVLDLGSLFAKIFKLSTASPAVSSHPGGAAATGSVDSGASTSLREAETLTLLPSLPPDTAASREPFTPVHTPLPASHPRSSAAAQRVEATGCSGSLPSSSGASIAPPLTPYSGSAGSVASVTLPSPGVDWATLPSVTIPLGSNSVTASSPRNPRQLRAPGEREPSVWMAPGPVPKTLFFTLPDIGEEWTSDSDSQDDPEGRGLSEGLRKQSSEKSKDPLPTNFTRNVQKAIDKFASESPSSFSSSGSRTPTEAHNSWPGSSTQSSTTGLSTERSSVSSWRDDEFDKVSAQKVHQLFWEVEELLFEGKVSPQTQNLLAECSEWARRSLHLRVVGRQLVPPTDEGFQHFQGSLPSSATHEALPHVPDHTSSSRELCISGSQIVPEVHSASALTDPDGTESADLTSCSSLKEEVYHVDGNIEEYFAFDRKQDGDEHLGQSPALRGRKRHRHGLPPISPDDCIRDAVAAEVFDHVWTNVVEILEDLIRKTWESALTGGKKHKEKLKVAENRSPHVLMSRLSTDVCSVPPSRSSDTLQPSLAPHFNPPQFPQLHRFSSNFYSDLSGVMTIQAKPLQQRPTYSADRTQNDQDDKLPGGGVGASSRHRLGRILDARGPQTSVKKTPVHRRLPSIASDPQRLKTPTVYSDEILRGTKLQTGIDYLPSPAAVQTSRSRLPPIGSETGEPNTAASGSRPVSYRGRHPQSRVFSAMPDSIERSPLRERTIVLEQLSRPSTTHTFRSDTPRKGSLTPVEFVAHTWTGQSILTGSQYLPKSYQRATLTARKRFQVAS.

Disordered regions lie at residues 22–105 (SPAV…SSGA), 144–175 (GSNS…APGP), 189–226 (EEWT…PTNF), 238–284 (ASES…SWRD), 432–455 (DGDE…GLPP), 573–602 (LQQR…ASSR), and 665–697 (AVQT…SYRG). A compositionally biased stretch (polar residues) spans 37-46 (SVDSGASTSL). Composition is skewed to low complexity over residues 51-65 (TLTL…TAAS) and 96-105 (SGSLPSSSGA). Positions 144–155 (GSNSVTASSPRN) are enriched in polar residues. A compositionally biased stretch (acidic residues) spans 189–200 (EEWTSDSDSQDD). Basic and acidic residues predominate over residues 201-220 (PEGRGLSEGLRKQSSEKSKD). The segment covering 239-250 (SESPSSFSSSGS) has biased composition (low complexity). Positions 251–261 (RTPTEAHNSWP) are enriched in polar residues. A compositionally biased stretch (low complexity) spans 262–274 (GSSTQSSTTGLST).

This sequence belongs to the FAM149 family.

The sequence is that of Protein FAM149A (Fam149a) from Mus musculus (Mouse).